The chain runs to 61 residues: UPF0434 protein PA14_25520 (61 aa).

It belongs to the UPF0434 family.

This is UPF0434 protein PA14_25520 from Pseudomonas aeruginosa (strain UCBPP-PA14).